A 519-amino-acid chain; its full sequence is Protein disulfide-isomerase A5 (519 aa).

A signal peptide spans 1–21 (MARAGPAWLLLAIWVVLPSWL). Cystine bridges form between C85–C94, C182–C185, C305–C308, and C426–C429. 3 Thioredoxin domains span residues 134–261 (FLKD…NPQP), 270–384 (PWAD…NPEA), and 378–506 (WMQN…ALRE). Positions 516 to 519 (KEEL) match the Prevents secretion from ER motif.

It belongs to the protein disulfide isomerase family. Interacts with CALR (via P-domain).

It is found in the endoplasmic reticulum lumen. It carries out the reaction Catalyzes the rearrangement of -S-S- bonds in proteins.. The polypeptide is Protein disulfide-isomerase A5 (PDIA5) (Homo sapiens (Human)).